The primary structure comprises 358 residues: Phospho-N-acetylmuramoyl-pentapeptide-transferase (358 aa).

The next 10 helical transmembrane spans lie at 3-23 (QILFAAAIALTVSILLTPALI), 54-74 (GVAILIGMWAGYLGSHLIGIA), 84-104 (ALLVLGLATALGAVGFIDDFI), 114-134 (LTAAGKYLGQLTAAIVFGVLA), 156-176 (ITTVSMGVIVFLAFVSLVVVA), 187-207 (LDGLAAGSMSLVLGGYVIITF), 231-251 (LALVCAAGTAACIGFLWWNAA), 255-275 (IFMGDTGSLALGGLLAGLSIT), 283-303 (VVIGALFVAEAASVVLQVAVF), and 330-350 (VIIRFWLLAAMASAFGLGLFY).

This sequence belongs to the glycosyltransferase 4 family. MraY subfamily. Mg(2+) is required as a cofactor.

The protein localises to the cell membrane. The enzyme catalyses UDP-N-acetyl-alpha-D-muramoyl-L-alanyl-gamma-D-glutamyl-meso-2,6-diaminopimeloyl-D-alanyl-D-alanine + di-trans,octa-cis-undecaprenyl phosphate = di-trans,octa-cis-undecaprenyl diphospho-N-acetyl-alpha-D-muramoyl-L-alanyl-D-glutamyl-meso-2,6-diaminopimeloyl-D-alanyl-D-alanine + UMP. The protein operates within cell wall biogenesis; peptidoglycan biosynthesis. Catalyzes the initial step of the lipid cycle reactions in the biosynthesis of the cell wall peptidoglycan: transfers peptidoglycan precursor phospho-MurNAc-pentapeptide from UDP-MurNAc-pentapeptide onto the lipid carrier undecaprenyl phosphate, yielding undecaprenyl-pyrophosphoryl-MurNAc-pentapeptide, known as lipid I. This Nocardia farcinica (strain IFM 10152) protein is Phospho-N-acetylmuramoyl-pentapeptide-transferase.